Consider the following 436-residue polypeptide: Succinyl-CoA:glutarate CoA-transferase (436 aa).

The transit peptide at 1 to 8 (MLWMLARA) directs the protein to the mitochondrion. The Nucleophile role is filled by aspartate 203. Residues lysine 392 and lysine 423 each carry the N6-acetyllysine modification.

The protein belongs to the CoA-transferase III family.

It is found in the mitochondrion. It catalyses the reaction glutarate + succinyl-CoA = glutaryl-CoA + succinate. It carries out the reaction 3-hydroxy-3-methylglutarate + succinyl-CoA = (3S)-3-hydroxy-3-methylglutaryl-CoA + succinate. The catalysed reaction is 3-hydroxy-3-methylglutarate + glutaryl-CoA = (3S)-3-hydroxy-3-methylglutaryl-CoA + glutarate. The enzyme catalyses hexanedioate + glutaryl-CoA = hexanedioyl-CoA + glutarate. It catalyses the reaction itaconate + glutaryl-CoA = itaconyl-CoA + glutarate. It carries out the reaction itaconate + succinyl-CoA = itaconyl-CoA + succinate. In terms of biological role, coenzyme A (CoA) transferase that reversibly catalyzes the transfer of a CoA moiety from a dicarboxyl-CoA to a dicarboxylate in a metabolite recycling process. Displays preference for succinyl-CoA and glutarate-CoA as dicarboxyl-CoA donors and glutarate, succinate, adipate/hexanedioate, itaconate and 3-hydroxy-3-methylglutarate as dicarboxylate acceptors. Acts on intermediates or end products of lysine and tryptophan degradation pathway, in particular catalyzes succinyl-CoA-dependent reesterification of free glutarate into glutaryl-CoA to prevent renal excretion of glutarate. Upon inflammation, may convert macrophage-derived itaconate to itaconyl-CoA in erythroid precursors where it negatively regulates the TCA cycle and heme synthesis to limit erythroid differentiation in the context of stress erythropoiesis. The sequence is that of Succinyl-CoA:glutarate CoA-transferase from Mus musculus (Mouse).